The sequence spans 384 residues: 8-amino-7-oxononanoate synthase (384 aa).

Arginine 21 serves as a coordination point for substrate. 108-109 (GF) is a binding site for pyridoxal 5'-phosphate. A substrate-binding site is contributed by histidine 133. Residues serine 179, histidine 207, and threonine 233 each coordinate pyridoxal 5'-phosphate. Residue lysine 236 is modified to N6-(pyridoxal phosphate)lysine. Threonine 352 contributes to the substrate binding site.

Belongs to the class-II pyridoxal-phosphate-dependent aminotransferase family. BioF subfamily. Homodimer. Pyridoxal 5'-phosphate serves as cofactor.

The catalysed reaction is 6-carboxyhexanoyl-[ACP] + L-alanine + H(+) = (8S)-8-amino-7-oxononanoate + holo-[ACP] + CO2. It participates in cofactor biosynthesis; biotin biosynthesis. In terms of biological role, catalyzes the decarboxylative condensation of pimeloyl-[acyl-carrier protein] and L-alanine to produce 8-amino-7-oxononanoate (AON), [acyl-carrier protein], and carbon dioxide. This Escherichia coli O7:K1 (strain IAI39 / ExPEC) protein is 8-amino-7-oxononanoate synthase.